The sequence spans 114 residues: Iron-sulfur cluster insertion protein ErpA (114 aa).

Cys-42, Cys-106, and Cys-108 together coordinate iron-sulfur cluster.

It belongs to the HesB/IscA family. Homodimer. Iron-sulfur cluster serves as cofactor.

Functionally, required for insertion of 4Fe-4S clusters for at least IspG. This Citrobacter koseri (strain ATCC BAA-895 / CDC 4225-83 / SGSC4696) protein is Iron-sulfur cluster insertion protein ErpA.